The primary structure comprises 2784 residues: Cilia- and flagella-associated protein 46 (2784 aa).

A TPR 1 repeat occupies 129–162 (GLEVAAANQPRYQFLVYNASVHHWRVVAPLHRDG). Positions 242–268 (TAAAAKLTELQKDVARLQVHLATLAAA) form a coiled coil. The TPR 2 repeat unit spans residues 401–434 (SLAPVVVAAHVKALEQLEDVLTTFTKLADVEGIH). 2 disordered regions span residues 543 to 562 (SAEP…RSKE) and 581 to 607 (RDLP…AAAR). Residues 585 to 595 (HPPPPAPTDPP) are compositionally biased toward pro residues. The stretch at 644–665 (AVDREMVLLQAQLAHYEAEAAI) forms a coiled coil. The segment at 670–697 (RRRADISPPTRPSPPEVDGEGVRQPPAT) is disordered. The stretch at 708–743 (ASVRSMRGAMSVNEPWLTLNNAVQLYNAALPLMQQH) is one TPR 3 repeat. 2 disordered regions span residues 799–837 (DAGQ…PAYK) and 929–954 (RVNE…KPHG). A compositionally biased stretch (acidic residues) spans 802 to 817 (QELEDDDDEDSLDEDG). One copy of the TPR 4 repeat lies at 976–1009 (LELWAKMARAVADAGVWPAALECSAAALAALPGA). Residues 1275-1288 (TGDLDGDGTDDEDD) are compositionally biased toward acidic residues. Disordered stretches follow at residues 1275 to 1351 (TGDL…RVPE) and 1640 to 1673 (AAGG…HGQL). The span at 1298–1311 (SGGGSSSGRAGGGF) shows a compositional bias: gly residues. Residues 1646-1658 (GGRESPSPHDDGI) are compositionally biased toward basic and acidic residues. 2 TPR repeats span residues 1712-1745 (HDVW…AADC) and 1854-1886 (MEML…LAAR). Residues 1961–1984 (RLAEVQLAAAEERERLAGADREKA) adopt a coiled-coil conformation. Disordered stretches follow at residues 2068–2112 (RPFV…EAAA), 2278–2303 (ATAE…PAAA), 2346–2389 (AAKG…PGAA), and 2441–2465 (LPLP…AGPT). The segment covering 2069–2083 (PFVPPPKPPGAPKRP) has biased composition (pro residues). Positions 2087 to 2096 (AEEEEDEEGP) are enriched in acidic residues. Residues 2097-2112 (DTAAADAAAEAAEAAA) are compositionally biased toward low complexity. A compositionally biased stretch (low complexity) spans 2378–2389 (SKQGPKSGPGAA). A compositionally biased stretch (basic and acidic residues) spans 2450–2461 (DGKKEKKDKKEA). One copy of the TPR 7 repeat lies at 2613-2646 (ATGGPCTGLLFLGVGRFAAHVPPAVLASAPLGGC).

Belongs to the CFAP46 family. Part of the PDCP1 complex composed of CFAP46, CFAP54, CFAP74 and CFAP221; the PDCP1 complex binds calmodulin.

The protein resides in the cytoplasm. It is found in the cytoskeleton. The protein localises to the cilium axoneme. As part of the central apparatus of the cilium axoneme plays a role in cilium movement and thereby cell motility. The sequence is that of Cilia- and flagella-associated protein 46 from Chlamydomonas reinhardtii (Chlamydomonas smithii).